A 795-amino-acid chain; its full sequence is Phenylalanine--tRNA ligase beta subunit (795 aa).

Residues 39–148 (AGSFHGVVVG…ADAPIGTDIR (110 aa)) form the tRNA-binding domain. Residues 401–476 (PKRATITLRR…RVYGYNNIPD (76 aa)) form the B5 domain. Mg(2+) is bound by residues D454, D460, E463, and E464. Residues 701-794 (SRFPANRRDI…LKERFQASLR (94 aa)) enclose the FDX-ACB domain.

This sequence belongs to the phenylalanyl-tRNA synthetase beta subunit family. Type 1 subfamily. In terms of assembly, tetramer of two alpha and two beta subunits. The cofactor is Mg(2+).

The protein localises to the cytoplasm. The enzyme catalyses tRNA(Phe) + L-phenylalanine + ATP = L-phenylalanyl-tRNA(Phe) + AMP + diphosphate + H(+). The chain is Phenylalanine--tRNA ligase beta subunit from Shigella dysenteriae serotype 1 (strain Sd197).